We begin with the raw amino-acid sequence, 209 residues long: Small ribosomal subunit protein uS4 (209 aa).

Positions G99–K179 constitute an S4 RNA-binding domain.

The protein belongs to the universal ribosomal protein uS4 family. Part of the 30S ribosomal subunit. Contacts protein S5. The interaction surface between S4 and S5 is involved in control of translational fidelity.

One of the primary rRNA binding proteins, it binds directly to 16S rRNA where it nucleates assembly of the body of the 30S subunit. Its function is as follows. With S5 and S12 plays an important role in translational accuracy. The chain is Small ribosomal subunit protein uS4 from Azoarcus sp. (strain BH72).